We begin with the raw amino-acid sequence, 374 residues long: tRNA-specific 2-thiouridylase MnmA (374 aa).

ATP is bound by residues 10 to 17 (AMSGGVDS) and leucine 36. Catalysis depends on cysteine 111, which acts as the Nucleophile. Cysteine 111 and cysteine 209 are joined by a disulfide. Glycine 135 provides a ligand contact to ATP. The tract at residues 159-161 (KDQ) is interaction with tRNA. The Cysteine persulfide intermediate role is filled by cysteine 209.

This sequence belongs to the MnmA/TRMU family.

The protein localises to the cytoplasm. It catalyses the reaction S-sulfanyl-L-cysteinyl-[protein] + uridine(34) in tRNA + AH2 + ATP = 2-thiouridine(34) in tRNA + L-cysteinyl-[protein] + A + AMP + diphosphate + H(+). Catalyzes the 2-thiolation of uridine at the wobble position (U34) of tRNA, leading to the formation of s(2)U34. The chain is tRNA-specific 2-thiouridylase MnmA from Acidobacterium capsulatum (strain ATCC 51196 / DSM 11244 / BCRC 80197 / JCM 7670 / NBRC 15755 / NCIMB 13165 / 161).